Consider the following 125-residue polypeptide: Ribosome-binding factor A (125 aa).

Belongs to the RbfA family. In terms of assembly, monomer. Binds 30S ribosomal subunits, but not 50S ribosomal subunits or 70S ribosomes.

The protein localises to the cytoplasm. In terms of biological role, one of several proteins that assist in the late maturation steps of the functional core of the 30S ribosomal subunit. Associates with free 30S ribosomal subunits (but not with 30S subunits that are part of 70S ribosomes or polysomes). Required for efficient processing of 16S rRNA. May interact with the 5'-terminal helix region of 16S rRNA. The protein is Ribosome-binding factor A of Desulfitobacterium hafniense (strain DSM 10664 / DCB-2).